Consider the following 421-residue polypeptide: Testin (421 aa).

In terms of domain architecture, PET spans 92-199 (MILTNPVAAK…GDVKLPQEMD (108 aa)). LIM zinc-binding domains are found at residues 234–297 (YSCY…CDSE), 299–359 (PRCA…NHAV), and 362–421 (QGCH…KMMS).

This sequence belongs to the prickle / espinas / testin family. As to quaternary structure, interacts via LIM domain 1 with ZYX. Interacts (via LIM domain 3) with ENAH and VASP. Interacts with ALKBH4, talin, actin, alpha-actinin, GRIP1 and PXN. Interacts (via LIM domain 2) with ACTL7A (via N-terminus). Heterodimer with ACTL7A; the heterodimer interacts with ENAH to form a heterotrimer.

The protein resides in the cytoplasm. The protein localises to the cell junction. Its subcellular location is the focal adhesion. Its function is as follows. Scaffold protein that may play a role in cell adhesion, cell spreading and in the reorganization of the actin cytoskeleton. Plays a role in the regulation of cell proliferation. May act as a tumor suppressor. The sequence is that of Testin (TES) from Loxodonta africana (African elephant).